The sequence spans 857 residues: DNA gyrase subunit A (857 aa).

The Topo IIA-type catalytic domain maps to 39-507 (LPDVRDGLKP…YEGDMSIEDL (469 aa)). Catalysis depends on tyrosine 127, which acts as the O-(5'-phospho-DNA)-tyrosine intermediate. The GyrA-box motif lies at 534 to 540 (QKRGGKG). The segment at 825–857 (REAEEVDGDVAVDETAEGAATTGTDEGEAPSAE) is disordered. Acidic residues predominate over residues 828–840 (EEVDGDVAVDETA).

Belongs to the type II topoisomerase GyrA/ParC subunit family. Heterotetramer, composed of two GyrA and two GyrB chains. In the heterotetramer, GyrA contains the active site tyrosine that forms a transient covalent intermediate with DNA, while GyrB binds cofactors and catalyzes ATP hydrolysis.

The protein localises to the cytoplasm. It carries out the reaction ATP-dependent breakage, passage and rejoining of double-stranded DNA.. Functionally, a type II topoisomerase that negatively supercoils closed circular double-stranded (ds) DNA in an ATP-dependent manner to modulate DNA topology and maintain chromosomes in an underwound state. Negative supercoiling favors strand separation, and DNA replication, transcription, recombination and repair, all of which involve strand separation. Also able to catalyze the interconversion of other topological isomers of dsDNA rings, including catenanes and knotted rings. Type II topoisomerases break and join 2 DNA strands simultaneously in an ATP-dependent manner. This chain is DNA gyrase subunit A, found in Streptomyces coelicolor (strain ATCC BAA-471 / A3(2) / M145).